Here is a 701-residue protein sequence, read N- to C-terminus: F-box/LRR-repeat protein 17 (701 aa).

A compositionally biased stretch (basic and acidic residues) spans 1–11 (MGHLLSKEPRN). 3 disordered regions span residues 1 to 20 (MGHL…RPRC), 72 to 94 (APAG…YAAA), and 227 to 300 (GGGG…DADC). The segment covering 227–237 (GGGGGPAGGGA) has biased composition (gly residues). Residues 252 to 264 (EQPPQPLCPPPSS) show a composition bias toward pro residues. In terms of domain architecture, F-box spans 318–365 (TPDINQLPPSILLKIFSNLSLDERCLSASLVCKYWRDLCLDFQFWKQL).

This sequence belongs to the FBXL17 family. Part of the SCF (SKP1-CUL1-F-box) E3 ubiquitin-protein ligase complex SCF(FBXL17) composed of CUL1, SKP1, RBX1 and FBXL17. Interacts with BTB domain-containing proteins such as KLHL12, BCL6 and BACH1; specifically recognizes and binds a conserved degron of non-consecutive residues present at the interface of BTB dimers of aberrant composition. Interacts with SUFU. Interacts with PRMT1.

It localises to the cytoplasm. The protein localises to the nucleus. Its function is as follows. Substrate-recognition component of the SCF(FBXL17) E3 ubiquitin ligase complex, a key component of a quality control pathway required to ensure functional dimerization of BTB domain-containing proteins (dimerization quality control, DQC). FBXL17 specifically recognizes and binds a conserved degron of non-consecutive residues present at the interface of BTB dimers of aberrant composition: aberrant BTB dimer are then ubiquitinated by the SCF(FBXL17) complex and degraded by the proteasome. The ability of the SCF(FBXL17) complex to eliminate compromised BTB dimers is required for the differentiation and survival of neural crest and neuronal cells. The SCF(FBXL17) complex mediates ubiquitination and degradation of BACH1. The SCF(FBXL17) complex is also involved in the regulation of the hedgehog/smoothened (Hh) signaling pathway by mediating the ubiquitination and degradation of SUFU, allowing the release of GLI1 from SUFU for proper Hh signal transduction. The SCF(FBXL17) complex mediates ubiquitination and degradation of PRMT1. In Homo sapiens (Human), this protein is F-box/LRR-repeat protein 17.